The sequence spans 242 residues: uncharacterized protein (242 aa).

The segment covering 1–12 has biased composition (basic and acidic residues); sequence MKLRRERFERRN. Residues 1-21 are disordered; it reads MKLRRERFERRNGSGKNSQSS. Over 1-23 the chain is Cytoplasmic; it reads MKLRRERFERRNGSGKNSQSSSS. Residues 24-44 traverse the membrane as a helical segment; that stretch reads WMVTFTDLITLILVFFILLFS. Over 45–242 the chain is Extracellular; sequence MSQIDLQKFK…VIKKSKTTSS (198 aa). The tract at residues 64 to 91 is disordered; the sequence is GNGLQPDQTSIEKKNTSPSDTKKQEDQQ. The segment covering 73–89 has biased composition (basic and acidic residues); that stretch reads SIEKKNTSPSDTKKQED. The OmpA-like domain maps to 117–238; sequence ERGVVLVLQE…RVEIVIKKSK (122 aa).

Belongs to the MotB family.

The protein resides in the cell membrane. Its function is as follows. May be involved in some transport function. This is an uncharacterized protein from Bacillus subtilis (strain 168).